Consider the following 247-residue polypeptide: Ribonuclease 3 (247 aa).

In terms of domain architecture, RNase III spans 5–147 (LIALQERLQH…LIGAVYLDAG (143 aa)). Glu40 contributes to the Mg(2+) binding site. Asp44 is a catalytic residue. The interval 104–124 (QRRSRRRCADELQPDEAGSGG) is disordered. Mg(2+)-binding residues include Asp133 and Glu136. Glu136 is a catalytic residue. The region spanning 174-244 (DAKTALQEWL…AAAMLATLKA (71 aa)) is the DRBM domain.

The protein belongs to the ribonuclease III family. In terms of assembly, homodimer. Requires Mg(2+) as cofactor.

The protein localises to the cytoplasm. It catalyses the reaction Endonucleolytic cleavage to 5'-phosphomonoester.. Its function is as follows. Digests double-stranded RNA. Involved in the processing of primary rRNA transcript to yield the immediate precursors to the large and small rRNAs (23S and 16S). Processes some mRNAs, and tRNAs when they are encoded in the rRNA operon. Processes pre-crRNA and tracrRNA of type II CRISPR loci if present in the organism. The protein is Ribonuclease 3 of Verminephrobacter eiseniae (strain EF01-2).